A 502-amino-acid polypeptide reads, in one-letter code: Lysine--tRNA ligase (502 aa).

Glutamate 403 and glutamate 410 together coordinate Mg(2+).

Belongs to the class-II aminoacyl-tRNA synthetase family. Homodimer. The cofactor is Mg(2+).

The protein localises to the cytoplasm. It carries out the reaction tRNA(Lys) + L-lysine + ATP = L-lysyl-tRNA(Lys) + AMP + diphosphate. This is Lysine--tRNA ligase from Synechococcus sp. (strain CC9605).